Consider the following 85-residue polypeptide: Dynein light chain 1, cytoplasmic (85 aa).

Belongs to the dynein light chain family. In terms of assembly, homodimer. Cytoplasmic dynein consists of two catalytic heavy chains (HCs) and a number of non-catalytic subunits which present intermediate chains (ICs), light intermediate chains (LICs) and light chains (LCs). Component of the nuclear pore complex (NPC). NPC constitutes the exclusive means of nucleocytoplasmic transport. NPCs allow the passive diffusion of ions and small molecules and the active, nuclear transport receptor-mediated bidirectional transport of macromolecules such as proteins, RNAs, ribonucleoparticles (RNPs), and ribosomal subunits across the nuclear envelope. Due to its 8-fold rotational symmetry, all subunits are present with 8 copies or multiples thereof.

The protein localises to the cytoplasm. It is found in the cytoskeleton. The protein resides in the nucleus. Its subcellular location is the nuclear pore complex. In terms of biological role, acts as one of several non-catalytic accessory components of the cytoplasmic dynein complex that are thought to be involved in linking dynein to cargos and to adapter proteins that regulate dynein function. Cytoplasmic dynein 1 acts as a motor for the intracellular retrograde motility of vesicles and organelles along microtubules. May play a role in changing or maintaining the spatial distribution of cytoskeletal structures. Also a component of the nuclear pore complex. This is Dynein light chain 1, cytoplasmic (dlc2) from Schizosaccharomyces pombe (strain 972 / ATCC 24843) (Fission yeast).